The sequence spans 660 residues: Bifunctional polymyxin resistance protein ArnA (660 aa).

Positions 1–304 (MKAIVFAYHD…DMSMVTDVRV (304 aa)) are formyltransferase ArnAFT. The active-site Proton donor; for formyltransferase activity is His104. (6R)-10-formyltetrahydrofolate-binding positions include Arg114 and 136 to 140 (VLKPD). The dehydrogenase ArnADH stretch occupies residues 314–660 (HRKRVLILGV…RGAVEELGKN (347 aa)). Residues Asp347 and 368 to 369 (DI) contribute to the NAD(+) site. UDP-alpha-D-glucuronate contacts are provided by residues Ala393, Tyr398, and 432 to 433 (TS). The active-site Proton acceptor; for decarboxylase activity is the Glu434. UDP-alpha-D-glucuronate is bound by residues Arg460, Asn492, 526 to 535 (KLVDGGEQKR), and Tyr613. Arg619 acts as the Proton donor; for decarboxylase activity in catalysis.

This sequence in the N-terminal section; belongs to the Fmt family. UDP-L-Ara4N formyltransferase subfamily. In the C-terminal section; belongs to the NAD(P)-dependent epimerase/dehydratase family. UDP-glucuronic acid decarboxylase subfamily. In terms of assembly, homohexamer, formed by a dimer of trimers.

It carries out the reaction UDP-alpha-D-glucuronate + NAD(+) = UDP-beta-L-threo-pentopyranos-4-ulose + CO2 + NADH. The catalysed reaction is UDP-4-amino-4-deoxy-beta-L-arabinose + (6R)-10-formyltetrahydrofolate = UDP-4-deoxy-4-formamido-beta-L-arabinose + (6S)-5,6,7,8-tetrahydrofolate + H(+). Its pathway is nucleotide-sugar biosynthesis; UDP-4-deoxy-4-formamido-beta-L-arabinose biosynthesis; UDP-4-deoxy-4-formamido-beta-L-arabinose from UDP-alpha-D-glucuronate: step 1/3. It functions in the pathway nucleotide-sugar biosynthesis; UDP-4-deoxy-4-formamido-beta-L-arabinose biosynthesis; UDP-4-deoxy-4-formamido-beta-L-arabinose from UDP-alpha-D-glucuronate: step 3/3. The protein operates within bacterial outer membrane biogenesis; lipopolysaccharide biosynthesis. In terms of biological role, bifunctional enzyme that catalyzes the oxidative decarboxylation of UDP-glucuronic acid (UDP-GlcUA) to UDP-4-keto-arabinose (UDP-Ara4O) and the addition of a formyl group to UDP-4-amino-4-deoxy-L-arabinose (UDP-L-Ara4N) to form UDP-L-4-formamido-arabinose (UDP-L-Ara4FN). The modified arabinose is attached to lipid A and is required for resistance to polymyxin and cationic antimicrobial peptides. In Photorhabdus laumondii subsp. laumondii (strain DSM 15139 / CIP 105565 / TT01) (Photorhabdus luminescens subsp. laumondii), this protein is Bifunctional polymyxin resistance protein ArnA.